A 337-amino-acid chain; its full sequence is tRNA N6-adenosine threonylcarbamoyltransferase (337 aa).

2 residues coordinate Fe cation: His-111 and His-115. Residues 134 to 138 (LVSGG), Asp-167, Gly-180, and Asn-272 contribute to the substrate site. Residue Asp-300 participates in Fe cation binding.

The protein belongs to the KAE1 / TsaD family. Fe(2+) serves as cofactor.

The protein resides in the cytoplasm. It carries out the reaction L-threonylcarbamoyladenylate + adenosine(37) in tRNA = N(6)-L-threonylcarbamoyladenosine(37) in tRNA + AMP + H(+). Required for the formation of a threonylcarbamoyl group on adenosine at position 37 (t(6)A37) in tRNAs that read codons beginning with adenine. Is involved in the transfer of the threonylcarbamoyl moiety of threonylcarbamoyl-AMP (TC-AMP) to the N6 group of A37, together with TsaE and TsaB. TsaD likely plays a direct catalytic role in this reaction. This chain is tRNA N6-adenosine threonylcarbamoyltransferase, found in Enterobacter sp. (strain 638).